The chain runs to 357 residues: F-box only protein 25 (357 aa).

An interaction with beta-actin region spans residues 1-83 (MPFLGQDWRS…NDTNTQCFYR (83 aa)). Residues 225–273 (LTLSDLPVHMLSNILYRFSDGWDIVTLGQVTPTLSALSEDRQLWKKLCQ) form the F-box domain.

As to quaternary structure, part of a SCF (SKP1-cullin-F-box) protein ligase complex consisting of FBXO25, SKP1, CUL1 and RBX1. Interacts directly with SKP1 and CUL1. Interacts (via C-terminus) with beta-actin (via N-terminus).

It localises to the nucleus. It functions in the pathway protein modification; protein ubiquitination. Substrate-recognition component of the SCF (SKP1-CUL1-F-box protein)-type E3 ubiquitin ligase complex. May play a role in accumulation of expanded polyglutamine (polyQ) protein huntingtin (HTT). The chain is F-box only protein 25 (FBXO25) from Bos taurus (Bovine).